The chain runs to 155 residues: MSRRGTAEEKTAKSDPIYRNRLVNMLVNRILKHGKKSLAYQIIYRAVKKIQQKTETNPLSVLRQAIRGVTPDIAVKARRVGGSTHQVPIEIGSTQGKALAIRWLLGASRKRPGRNMAFKLSSELVDAAKGSGDSIRKKEETHRMAEANRAFAHFR.

Belongs to the universal ribosomal protein uS7 family. As to quaternary structure, part of the 30S ribosomal subunit.

The protein localises to the plastid. It localises to the chloroplast. Its function is as follows. One of the primary rRNA binding proteins, it binds directly to 16S rRNA where it nucleates assembly of the head domain of the 30S subunit. The protein is Small ribosomal subunit protein uS7c (rps7) of Canella winterana (Wild cinnamon).